The chain runs to 476 residues: Aspartyl/glutamyl-tRNA(Asn/Gln) amidotransferase subunit B (476 aa).

This sequence belongs to the GatB/GatE family. GatB subfamily. In terms of assembly, heterotrimer of A, B and C subunits.

The enzyme catalyses L-glutamyl-tRNA(Gln) + L-glutamine + ATP + H2O = L-glutaminyl-tRNA(Gln) + L-glutamate + ADP + phosphate + H(+). It carries out the reaction L-aspartyl-tRNA(Asn) + L-glutamine + ATP + H2O = L-asparaginyl-tRNA(Asn) + L-glutamate + ADP + phosphate + 2 H(+). Its function is as follows. Allows the formation of correctly charged Asn-tRNA(Asn) or Gln-tRNA(Gln) through the transamidation of misacylated Asp-tRNA(Asn) or Glu-tRNA(Gln) in organisms which lack either or both of asparaginyl-tRNA or glutaminyl-tRNA synthetases. The reaction takes place in the presence of glutamine and ATP through an activated phospho-Asp-tRNA(Asn) or phospho-Glu-tRNA(Gln). The protein is Aspartyl/glutamyl-tRNA(Asn/Gln) amidotransferase subunit B of Bacillus cytotoxicus (strain DSM 22905 / CIP 110041 / 391-98 / NVH 391-98).